Here is a 445-residue protein sequence, read N- to C-terminus: ATP-dependent rRNA helicase rrp3 (445 aa).

The segment covering 1–10 has biased composition (basic and acidic residues); it reads MSKNSSRDSS. Positions 1–28 are disordered; it reads MSKNSSRDSSPEEVSPDTETPSTTTAPK. The span at 17-28 shows a compositional bias: low complexity; sequence DTETPSTTTAPK. The short motif at 28–56 is the Q motif element; sequence KTFRELGVIDSLCEACEELGYTAPTPIQE. Positions 59-229 constitute a Helicase ATP-binding domain; it reads IPIALEGRDL…RASLSDPVRV (171 aa). 72–79 contacts ATP; that stretch reads AETGSGKT. The short motif at 178 to 181 is the DEAD box element; the sequence is DEAD. Residues 240-400 enclose the Helicase C-terminal domain; it reads KLLQSYLFIP…EYKPEKDEVM (161 aa). Positions 415-445 are disordered; sequence LTMRDMQDKDNKGRGPRNRKRTRDDLDQDDG.

It belongs to the DEAD box helicase family. DDX47/RRP3 subfamily. As to quaternary structure, interacts with the SSU processome.

It localises to the nucleus. It catalyses the reaction ATP + H2O = ADP + phosphate + H(+). Its function is as follows. ATP-dependent rRNA helicase required for pre-ribosomal RNA processing. Involved in the maturation of the 35S-pre-rRNA and to its cleavage to mature 18S rRNA. In Aspergillus terreus (strain NIH 2624 / FGSC A1156), this protein is ATP-dependent rRNA helicase rrp3.